A 257-amino-acid chain; its full sequence is MNTAIITGAAQGVGLCIAEALAQRNYRIVLSDIDTEKGPAAASKLNLTHGEGTAAFFHCDLSNLREIDALLSFTIETMGGFSVLINNAGYLRAPFLALSAQDIQDMITVNLTAPIYATQQAIKYWDGLHQGQAGCVVSVTSSSSFKTYASIAPYGAAKAGAAMFTFAAGAFHPRVRVNAVAPTAIATGFDKNRMRVETDRTGPGYTPEEEMRAMGLKRLQPQEVAEAVVRCVEDKGLYGKVLYLDAVEGIKIHDGYT.

An N-terminal signal peptide occupies residues methionine 1–alanine 22. Residue valine 13 coordinates NADP(+). Asparagine 46 is a glycosylation site (N-linked (GlcNAc...) asparagine). 2 residues coordinate NADP(+): aspartate 60 and asparagine 87. An N-linked (GlcNAc...) asparagine glycan is attached at asparagine 110. Tyrosine 154, lysine 158, isoleucine 185, and threonine 187 together coordinate NADP(+). Tyrosine 154 acts as the Proton acceptor in catalysis. Lysine 158 (lowers pKa of active site Tyr) is an active-site residue.

It belongs to the short-chain dehydrogenases/reductases (SDR) family.

The protein operates within mycotoxin biosynthesis. Short chain dehydrogenase; part of the gene cluster that mediates the biosynthesis of helvolic acid, an antibacterial nortriterpenoid. Protostadienol synthase helA cyclizes (3S)-oxidosqualene to (17Z)-protosta-17(20),24-dien-3-beta-ol (protostadienol). The synthesis of protostadienol is followed by several steps of monooxygenation, dehydrogenation, and acyl transfer to yield the final helvolic acid. Following the cyclization to the tetracyclic protostadienol by helA, cytochrome P450 monooxygenases helB1-mediated and helB2-mediated oxidation at C-4 and C-16, acyltransferase helD2-dependent acetylation of 16-OH, oxidation of C-21 by cytochrome P450 monooxygenase helB4, and short chain dehydrogenase helC-dependent oxidative decarboxylation yield the fusidane skeleton. This intermediate is further modified in three additional steps mediated by the cytochrome P450 monooxygenase helB3, the acyltransferase helD1, and the 3-ketosteroid 1-dehydrogenase helE to give helvolic acid. Compared with the late stages in the biosynthesis of helvolic acid, enzymes involved in the early stage modifications act in a relatively strict order. The hydroxylation of C-16 by helB1 and subsequent acetylation by helD2 should occur before the helB3-mediated oxidation of C-21. C-4 demethylation in fusidane-type antibiotics proceeds in an unusual manner though it is also achieved by oxidative decarboxylation. The methyl group at C-4 beta position is oxidized by helB1 and subsequently removed by the short chain dehydrogenase helC. The protein is Short chain dehydrogenase helC of Aspergillus fumigatus (strain ATCC MYA-4609 / CBS 101355 / FGSC A1100 / Af293) (Neosartorya fumigata).